The primary structure comprises 48 residues: Lantibiotic salivaricin-A (48 aa).

The propeptide occupies 1–26; sequence MKNSKDILNNAIEEVSEKELMEVAGG. Cross-links (beta-methyllanthionine (Thr-Cys)) lie at residues 35-40 and 37-47; these read TITDDC and TDDCPNSVFVC. Residues 43-48 constitute a cross-link (lanthionine (Ser-Cys)); sequence SVFVCC.

The protein belongs to the type A lantibiotic family. Maturation of lantibiotics involves the enzymatic conversion of Thr, and Ser into dehydrated AA and the formation of thioether bonds with cysteine. This is followed by membrane translocation and cleavage of the modified precursor.

Its function is as follows. Lanthionine-containing peptide antibiotic (lantibiotic) active on Gram-positive bacteria. The bactericidal activity of lantibiotics is based on depolarization of energized bacterial cytoplasmic membranes, initiated by the formation of aqueous transmembrane pores. The sequence is that of Lantibiotic salivaricin-A (salA) from Streptococcus salivarius.